A 253-amino-acid polypeptide reads, in one-letter code: 5-oxoprolinase subunit A (253 aa).

It belongs to the LamB/PxpA family. Forms a complex composed of PxpA, PxpB and PxpC.

The enzyme catalyses 5-oxo-L-proline + ATP + 2 H2O = L-glutamate + ADP + phosphate + H(+). Its function is as follows. Catalyzes the cleavage of 5-oxoproline to form L-glutamate coupled to the hydrolysis of ATP to ADP and inorganic phosphate. The polypeptide is 5-oxoprolinase subunit A (Bacillus anthracis (strain CDC 684 / NRRL 3495)).